The primary structure comprises 1687 residues: Zinc finger protein 142 (1687 aa).

2 disordered regions span residues 1-23 and 83-150; these read MTDP…LCPE and TLTP…RLEG. Positions 125-140 are enriched in basic and acidic residues; it reads KEEKSDTQKDSQKAVD. At Ser154 the chain carries Phosphoserine. 3 consecutive C2H2-type zinc fingers follow at residues 163–185, 219–242, and 253–275; these read HMCP…LHLH, HHCP…ASMH, and YACP…LKSH. The C2H2-type 4; atypical zinc finger occupies 286–311; that stretch reads LRCFQEGCSYAAPDRKAFIKHLKETH. C2H2-type zinc fingers lie at residues 316 to 340, 343 to 366, 372 to 395, 401 to 423, 429 to 451, 457 to 479, 485 to 507, 512 to 536, 544 to 567, and 573 to 596; these read VECR…HKSH, FHCP…KQGH, LRCT…GKMH, HQCP…MLLH, HKCE…MLTH, YMCT…MRKH, YQCN…KLRH, LMCE…SQHH, YPCH…NCKH, and FHCA…RKAH. Residue Lys594 forms a Glycyl lysine isopeptide (Lys-Gly) (interchain with G-Cter in SUMO2) linkage. Disordered stretches follow at residues 613-690, 704-798, 897-935, 947-1014, and 1052-1092; these read EPEG…EVEE, LESV…PPLP, KGLP…EAEL, REPE…SPTE, and GRGG…GDGD. Over residues 725–739 the composition is skewed to low complexity; it reads PLGLEGPDGLEGPEL. Over residues 1061–1075 the composition is skewed to polar residues; the sequence is TPQTQPDVSPLSNGD. A compositionally biased stretch (low complexity) spans 1082–1092; it reads GSTESSSGDGD. 15 consecutive C2H2-type zinc fingers follow at residues 1135–1158, 1171–1194, 1200–1222, 1228–1251, 1257–1280, 1286–1309, 1328–1351, 1354–1377, 1380–1403, 1424–1446, 1452–1474, 1480–1502, 1508–1530, 1536–1559, and 1565–1587; these read LHCS…KRRH, LQCG…RLKH, HQCP…QSRH, IPCS…LRVH, HFCP…NSCH, FACS…LRRH, LHCS…RKQH, LECG…RQQH, HRCQ…LEQH, LHCP…VKGH, YKCT…SRIH, YHCH…MRIH, YLCP…MTKH, YQCP…ETRH, and FMCE…LRKH. Lys1193 participates in a covalent cross-link: Glycyl lysine isopeptide (Lys-Gly) (interchain with G-Cter in SUMO2). A Glycyl lysine isopeptide (Lys-Gly) (interchain with G-Cter in SUMO2) cross-link involves residue Lys1242. A Glycyl lysine isopeptide (Lys-Gly) (interchain with G-Cter in SUMO2) cross-link involves residue Lys1591. 2 consecutive C2H2-type zinc fingers follow at residues 1593–1615 and 1621–1643; these read YVCN…ALTH and FFCR…VRRH. Positions 1638–1687 are disordered; sequence KHVRRHHPDQADPNQGVGKDPTTPTVHLHDVQLEDPSPPAPAAPHTGPEG.

This sequence belongs to the krueppel C2H2-type zinc-finger protein family.

It localises to the nucleus. May be involved in transcriptional regulation. In Homo sapiens (Human), this protein is Zinc finger protein 142.